Reading from the N-terminus, the 482-residue chain is GTPase Obg (482 aa).

Residues 2 to 159 enclose the Obg domain; it reads PRFIDRVVVH…RELTLELKTV (158 aa). The OBG-type G domain occupies 160-341; the sequence is ADVGLVGFPS…LIFALWDMVA (182 aa). GTP-binding positions include 166–173, 191–195, 212–215, 292–295, and 322–324; these read GFPSAGKS, FTTLA, DVPG, NKID, and STV. Mg(2+) contacts are provided by Ser173 and Thr193. The 79-residue stretch at 359–437 folds into the OCT domain; that stretch reads PIPVDETAFS…IGDMTFDWEP (79 aa). Residues 450-482 are disordered; it reads RGTDVRLEQTDRVGADERKAARKARRQSDDGEE. Positions 452–468 are enriched in basic and acidic residues; it reads TDVRLEQTDRVGADERK.

The protein belongs to the TRAFAC class OBG-HflX-like GTPase superfamily. OBG GTPase family. As to quaternary structure, monomer. It depends on Mg(2+) as a cofactor.

It localises to the cytoplasm. In terms of biological role, an essential GTPase which binds GTP, GDP and possibly (p)ppGpp with moderate affinity, with high nucleotide exchange rates and a fairly low GTP hydrolysis rate. Plays a role in control of the cell cycle, stress response, ribosome biogenesis and in those bacteria that undergo differentiation, in morphogenesis control. This Mycolicibacterium gilvum (strain PYR-GCK) (Mycobacterium gilvum (strain PYR-GCK)) protein is GTPase Obg.